The following is a 296-amino-acid chain: 4-hydroxy-tetrahydrodipicolinate synthase (296 aa).

Thr-44 provides a ligand contact to pyruvate. Tyr-132 (proton donor/acceptor) is an active-site residue. Catalysis depends on Lys-162, which acts as the Schiff-base intermediate with substrate. A pyruvate-binding site is contributed by Ile-204.

Belongs to the DapA family. As to quaternary structure, homotetramer; dimer of dimers.

The protein localises to the cytoplasm. It carries out the reaction L-aspartate 4-semialdehyde + pyruvate = (2S,4S)-4-hydroxy-2,3,4,5-tetrahydrodipicolinate + H2O + H(+). The protein operates within amino-acid biosynthesis; L-lysine biosynthesis via DAP pathway; (S)-tetrahydrodipicolinate from L-aspartate: step 3/4. Its function is as follows. Catalyzes the condensation of (S)-aspartate-beta-semialdehyde [(S)-ASA] and pyruvate to 4-hydroxy-tetrahydrodipicolinate (HTPA). The protein is 4-hydroxy-tetrahydrodipicolinate synthase of Novosphingobium aromaticivorans (strain ATCC 700278 / DSM 12444 / CCUG 56034 / CIP 105152 / NBRC 16084 / F199).